A 460-amino-acid chain; its full sequence is Cobyrinate a,c-diamide synthase (460 aa).

One can recognise a GATase cobBQ-type domain in the interval 248-440; the sequence is KIAVARDAAF…THFHFGSSTK (193 aa). Cys-331 functions as the Nucleophile in the catalytic mechanism.

It belongs to the CobB/CbiA family. It depends on Mg(2+) as a cofactor.

The catalysed reaction is cob(II)yrinate + 2 L-glutamine + 2 ATP + 2 H2O = cob(II)yrinate a,c diamide + 2 L-glutamate + 2 ADP + 2 phosphate + 2 H(+). The protein operates within cofactor biosynthesis; adenosylcobalamin biosynthesis; cob(II)yrinate a,c-diamide from sirohydrochlorin (anaerobic route): step 10/10. In terms of biological role, catalyzes the ATP-dependent amidation of the two carboxylate groups at positions a and c of cobyrinate, using either L-glutamine or ammonia as the nitrogen source. The polypeptide is Cobyrinate a,c-diamide synthase (Priestia megaterium (Bacillus megaterium)).